Reading from the N-terminus, the 346-residue chain is MNPHAKLISLISLLLGTTITISSNHWIMAWTGLEINTLAIIPLISKSHHPRAVEASVKYFLVQAAASALVLFSSMSNAWATGQWDITQLTHPTASMLLTAAIAIKLGLVPFHFWFPEVLQGTSLTTALLLSTLMKLPPMAILLMTSPSLNPTVLTSMALASAALGGWMGLNQTQTRKILAFSSIAHLGWMTMIIIYNPKLTLLTFYLYILMTATVFLSLNTTKTLKLSTLMTSWTKAPVLNAALMLTLLSLAGLPPLTGFMPKWLILQELTKQEMTTVATIIALLSLLGLFFYLRLAYYATITLPPNSANHMKQWYISNPTNTSIAILSSLSAILLPISPMILAAL.

The next 11 helical transmembrane spans lie at 1-21 (MNPH…TITI), 25-45 (HWIM…PLIS), 60-80 (FLVQ…NAWA), 96-116 (MLLT…FWFP), 124-144 (LTTA…ILLM), 149-169 (LNPT…GWMG), 178-198 (ILAF…IYNP), 200-220 (LTLL…LSLN), 242-262 (AALM…GFMP), 274-294 (EMTT…FFYL), and 325-345 (IAIL…ILAA).

This sequence belongs to the complex I subunit 2 family.

The protein resides in the mitochondrion inner membrane. It catalyses the reaction a ubiquinone + NADH + 5 H(+)(in) = a ubiquinol + NAD(+) + 4 H(+)(out). Its function is as follows. Core subunit of the mitochondrial membrane respiratory chain NADH dehydrogenase (Complex I) that is believed to belong to the minimal assembly required for catalysis. Complex I functions in the transfer of electrons from NADH to the respiratory chain. The immediate electron acceptor for the enzyme is believed to be ubiquinone. The chain is NADH-ubiquinone oxidoreductase chain 2 (MT-ND2) from Struthio camelus (Common ostrich).